A 331-amino-acid polypeptide reads, in one-letter code: Putative NAD(P)H nitroreductase acg (331 aa).

FMN is bound by residues 28 to 32 (QPWRW) and arginine 316.

The protein belongs to the nitroreductase family. FMN serves as cofactor.

This is Putative NAD(P)H nitroreductase acg (acg) from Mycobacterium tuberculosis (strain CDC 1551 / Oshkosh).